Reading from the N-terminus, the 129-residue chain is uncharacterized protein (129 aa).

Belongs to the asfivirus C129R family.

The protein localises to the virion. Its function is as follows. Plays a role in the inhibition of type I interferon signaling pathway. Mechanistically, specifically interacts with 2',3'-cGAMP and cleaves it via its phosphodiesterase activity. In turn, prevents 2',3'-cGAMP interaction with host ER-resident STING1 leading to inhibition of downstream signaling pathway and type I interferon production. This is an uncharacterized protein from African swine fever virus (isolate Pig/Kenya/KEN-50/1950) (ASFV).